A 523-amino-acid polypeptide reads, in one-letter code: Probable DNA ligase (523 aa).

Glu210 contributes to the ATP binding site. Lys212 acts as the N6-AMP-lysine intermediate in catalysis. Residues Arg217, Arg232, Glu261, Phe317, Arg388, and Lys394 each contribute to the ATP site.

This sequence belongs to the ATP-dependent DNA ligase family. Requires Mg(2+) as cofactor.

It carries out the reaction ATP + (deoxyribonucleotide)n-3'-hydroxyl + 5'-phospho-(deoxyribonucleotide)m = (deoxyribonucleotide)n+m + AMP + diphosphate.. DNA ligase that seals nicks in double-stranded DNA during DNA replication, DNA recombination and DNA repair. This is Probable DNA ligase from Nocardia farcinica (strain IFM 10152).